We begin with the raw amino-acid sequence, 407 residues long: MAFFGLSRVSRRLLKSSVSVTPSSSSALLQSQHKSLSNPVTTHYTNPFTKCYPSWNDNYQVWSKGRELHQEKFFGVGWNYRLICGMSSSSSVLEGKPKKDDKEKSDGVVVKEASWIDLYLPEEVRGYAKLARLDKPIGTWLLAWPCMWSIALAADPGSLPSFKYMALFGCGALLLRGAGCTINDLLDQDIDTKVDRTKLRPIASGLLTPFQGIGFLGLQLLLGLGILLQLNNYSRVLGASSLLLVFSYPLMKRFTFWPQAFLGLTINWGALLGWTAVKGSIAPSIVLPLYLSGVCWTLVYDTIYAHQDKEDDVKVGVKSTALRFGDNTKLWLTGFGTASIGFLALSGFSADLGWQYYASLAAASGQLGWQIGTADLSSGADCSRKFVSNKWFGAIIFSGVVLGRSFQ.

A mitochondrion-targeting transit peptide spans 1-20; that stretch reads MAFFGLSRVSRRLLKSSVSV. 6 helical membrane passes run 137–157, 162–182, 210–230, 254–274, 279–299, and 330–350; these read IGTWLLAWPCMWSIALAADPG, FKYMALFGCGALLLRGAGCTI, FQGIGFLGLQLLLGLGILLQL, FTFWPQAFLGLTINWGALLGW, GSIAPSIVLPLYLSGVCWTLV, and LWLTGFGTASIGFLALSGFSA.

Belongs to the UbiA prenyltransferase family. Mg(2+) is required as a cofactor. In terms of tissue distribution, expressed in flowers.

Its subcellular location is the mitochondrion inner membrane. It catalyses the reaction an all-trans-polyprenyl diphosphate + 4-hydroxybenzoate = a 4-hydroxy-3-(all-trans-polyprenyl)benzoate + diphosphate. The protein operates within cofactor biosynthesis; ubiquinone biosynthesis. Catalyzes the prenylation of para-hydroxybenzoate (PHB) with an all-trans polyprenyl group. Mediates the second step in the final reaction sequence of coenzyme Q (CoQ) biosynthesis, which is the condensation of the polyisoprenoid side chain with PHB, generating the first membrane-bound Q intermediate. Required for embryo development. The protein is 4-hydroxybenzoate polyprenyltransferase, mitochondrial of Arabidopsis thaliana (Mouse-ear cress).